Consider the following 198-residue polypeptide: Thymidine kinase (198 aa).

ATP is bound by residues 16–23 (GGMYSGKS) and 89–92 (EEGQ). Glutamate 90 (proton acceptor) is an active-site residue. Zn(2+) is bound by residues cysteine 146, cysteine 149, cysteine 184, and cysteine 187.

Belongs to the thymidine kinase family. As to quaternary structure, homotetramer.

The protein resides in the cytoplasm. The enzyme catalyses thymidine + ATP = dTMP + ADP + H(+). In Dictyoglomus thermophilum (strain ATCC 35947 / DSM 3960 / H-6-12), this protein is Thymidine kinase.